The chain runs to 377 residues: [2-(trimethylamino)ethyl]phosphonate dioxygenase (377 aa).

The tract at residues 95–119 is disordered; it reads DTDQSSEVGRTSPDVETWDSSQPAP. Asn187 is a binding site for [2-(trimethylamino)ethyl]phosphonate. Residue His198 participates in 2-oxoglutarate binding. The Fe(2+) site is built by His198 and Asp200. The [2-(trimethylamino)ethyl]phosphonate site is built by Asp200, Asn201, Tyr203, Asn286, and Arg288. His341, Arg343, and Arg352 together coordinate 2-oxoglutarate. His341 provides a ligand contact to Fe(2+).

Belongs to the gamma-BBH/TMLD family. As to quaternary structure, homodimer. Fe(2+) serves as cofactor. The cofactor is L-ascorbate.

The enzyme catalyses [2-(trimethylamino)ethyl]phosphonate + 2-oxoglutarate + O2 = [(1R)-1-hydroxy-2-(trimethylamino)ethyl]phosphonate + succinate + CO2. Functionally, involved in the degradation of the naturally occurring organophosphonate 2-(trimethylammonio)ethylphosphonate (TMAEP). Catalyzes the hydroxylation of TMAEP to (R)-1-hydroxy-2-(trimethylammonio)ethylphosphonate (OH-TMAEP). Is highly specific for its N-trimethylated substrate. Cannot use gamma-butyrobetaine as substrate. In Leisingera caerulea (Phaeobacter caeruleus), this protein is [2-(trimethylamino)ethyl]phosphonate dioxygenase.